Here is a 207-residue protein sequence, read N- to C-terminus: Vascular endothelial growth factor B (207 aa).

An N-terminal signal peptide occupies residues 1–21 (MSPLLRRLLLVALLQLACTQA). Disulfide bonds link C78/C122 and C82/C124. The segment at 140–182 (IPHHRPQPRSVLSWDSAPGASSPADIIHPTPAPGPSAHAAPSA) is disordered.

The protein belongs to the PDGF/VEGF growth factor family. In terms of assembly, homodimer; disulfide-linked. Can also form heterodimer with VEGF.

Its subcellular location is the secreted. Growth factor for endothelial cells. VEGF-B167 binds heparin and neuropilin-1 whereas the binding to neuropilin-1 of VEGF-B186 is regulated by proteolysis. The protein is Vascular endothelial growth factor B (Vegfb) of Rattus norvegicus (Rat).